The sequence spans 442 residues: Histidine--tRNA ligase (442 aa).

It belongs to the class-II aminoacyl-tRNA synthetase family. In terms of assembly, homodimer.

The protein resides in the cytoplasm. It carries out the reaction tRNA(His) + L-histidine + ATP = L-histidyl-tRNA(His) + AMP + diphosphate + H(+). The protein is Histidine--tRNA ligase of Wolinella succinogenes (strain ATCC 29543 / DSM 1740 / CCUG 13145 / JCM 31913 / LMG 7466 / NCTC 11488 / FDC 602W) (Vibrio succinogenes).